The primary structure comprises 226 residues: Protein GrpE (226 aa).

Disordered regions lie at residues 1-31 (MTPN…PDTL) and 189-226 (VSKG…PAEA). Positions 192-218 (GGPKAAEASKPAGEAPKPAGEAPKPAG) are enriched in low complexity.

It belongs to the GrpE family. In terms of assembly, homodimer.

The protein localises to the cytoplasm. In terms of biological role, participates actively in the response to hyperosmotic and heat shock by preventing the aggregation of stress-denatured proteins, in association with DnaK and GrpE. It is the nucleotide exchange factor for DnaK and may function as a thermosensor. Unfolded proteins bind initially to DnaJ; upon interaction with the DnaJ-bound protein, DnaK hydrolyzes its bound ATP, resulting in the formation of a stable complex. GrpE releases ADP from DnaK; ATP binding to DnaK triggers the release of the substrate protein, thus completing the reaction cycle. Several rounds of ATP-dependent interactions between DnaJ, DnaK and GrpE are required for fully efficient folding. This chain is Protein GrpE, found in Methylobacterium nodulans (strain LMG 21967 / CNCM I-2342 / ORS 2060).